The following is a 522-amino-acid chain: 56 kDa type-specific antigen (522 aa).

The N-terminal stretch at 1–22 is a signal peptide; it reads MKKIMLIASAMSALSLPFSASA. A helical transmembrane segment spans residues 67–87; sequence LTTMLPFGGTLAAGMTIAPGF. The segment at 385–417 is disordered; it reads AQEEGDDQSQVSCNDKKQQAVAEDSKAGSSKEG. Positions 398-417 are enriched in basic and acidic residues; that stretch reads NDKKQQAVAEDSKAGSSKEG. A helical membrane pass occupies residues 470-490; it reads IGVVASGVLGVAINVADGVCV.

The protein resides in the cell membrane. In terms of biological role, may be an adherent factor for rickettsial adsorption to the host-cell surface and a determinant of virulence of individual rickettsial strain. It is the major outer membrane protein. The polypeptide is 56 kDa type-specific antigen (Orientia tsutsugamushi (Rickettsia tsutsugamushi)).